The sequence spans 178 residues: uncharacterized protein (178 aa).

The protein belongs to the mimivirus L39/R874 family.

This is an uncharacterized protein from Acanthamoeba polyphaga (Amoeba).